A 339-amino-acid chain; its full sequence is Phenylalanine--tRNA ligase alpha subunit (339 aa).

Glutamate 250 is a Mg(2+) binding site.

This sequence belongs to the class-II aminoacyl-tRNA synthetase family. Phe-tRNA synthetase alpha subunit type 1 subfamily. Tetramer of two alpha and two beta subunits. It depends on Mg(2+) as a cofactor.

Its subcellular location is the cytoplasm. It catalyses the reaction tRNA(Phe) + L-phenylalanine + ATP = L-phenylalanyl-tRNA(Phe) + AMP + diphosphate + H(+). The protein is Phenylalanine--tRNA ligase alpha subunit of Azobacteroides pseudotrichonymphae genomovar. CFP2.